A 597-amino-acid polypeptide reads, in one-letter code: MLLTKRFSKLFKLTFIVLILCGLFVITNKYMDENTSVKEYKEYLDRYVQSYSNKYSSSSDAASADDSTPLRDNDEAGNEKLKSFYNNVFNFLMVDSPKGSTAKQYNEACLLKGDIGDRPDHYKDLYKLSAKELSKCLELSPDEVASLTKSHKDYVEHIATLVSPKGTYKGSGIATVGGGKFSLMAFLIIKTLRNMGTTLPVEVLIPPGDEGETEFCNKILPKYNSKCIYVSDILPRETIEKFVFKGYQFKSLALIASSFENLLLLDADNFPIKPLDNIFNEEPYVSTGLVMWPDFWRRTTHPLYYDIAGIAVDKKKRVRNSRDDITPPAVYTKDLKDLSDVPLSDLDGTIPDVSTESGQLMINKTKHLATALLSLFYNVNGPTWYYPIFSQKAAGEGDKETFIAAANFYGLSFYQVRTRTGVEGYHDEDGFHGVAMLQHDFVQDYGRYLNAMESIGNKYGGTKSADAIKFDKNYSLEKYTEEFFDNEDLNAKNHVDVMFIHSNFPKFDPYDLSKSNFLTTNGKPARSYTALKKVKNYDIELENFKVLNEYVCVNKNPFKYLDDLLGQDKTEWKRVCGYITDRLAFLESTHDKAIAGK.

The Cytoplasmic segment spans residues 1–12 (MLLTKRFSKLFK). The helical; Signal-anchor for type II membrane protein transmembrane segment at 13 to 28 (LTFIVLILCGLFVITN) threads the bilayer. The Extracellular portion of the chain corresponds to 29 to 597 (KYMDENTSVK…STHDKAIAGK (569 aa)). Asparagine 34, asparagine 363, and asparagine 473 each carry an N-linked (GlcNAc...) asparagine glycan.

It belongs to the MNN1/MNT family. Interacts with SVP26.

The protein resides in the golgi apparatus membrane. Its pathway is protein modification; protein glycosylation. Functionally, alpha-1,2-mannosyltransferase, responsible for addition of the first alpha-1,2-linked mannose to form the branches on the mannan backbone of oligosaccharides. This Saccharomyces cerevisiae (strain ATCC 204508 / S288c) (Baker's yeast) protein is Alpha-1,2-mannosyltransferase MNN2 (MNN2).